The sequence spans 304 residues: NADH-cytochrome b5 reductase 2 (304 aa).

The chain crosses the membrane as a helical span at residues 6–26 (GTPVVVAVAAVAATVLLLLLL). In terms of domain architecture, FAD-binding FR-type spans 43 to 155 (QAKYPLPLVG…RGPNGLLVYK (113 aa)). FAD-binding positions include 135–165 (DSMK…IKPD) and 174–209 (FAKH…KCYL).

This sequence belongs to the flavoprotein pyridine nucleotide cytochrome reductase family. Requires FAD as cofactor.

It localises to the membrane. The catalysed reaction is 2 Fe(III)-[cytochrome b5] + NADH = 2 Fe(II)-[cytochrome b5] + NAD(+) + H(+). Functionally, NADH-cytochrome b5 reductases are involved in desaturation and elongation of fatty acids, cholesterol biosynthesis and drug metabolism. This Gallus gallus (Chicken) protein is NADH-cytochrome b5 reductase 2 (CYB5R2).